A 232-amino-acid polypeptide reads, in one-letter code: Cytidylate kinase (232 aa).

Gly19–Thr27 lines the ATP pocket.

Belongs to the cytidylate kinase family. Type 1 subfamily.

The protein resides in the cytoplasm. It carries out the reaction CMP + ATP = CDP + ADP. The catalysed reaction is dCMP + ATP = dCDP + ADP. The protein is Cytidylate kinase of Nitratidesulfovibrio vulgaris (strain DP4) (Desulfovibrio vulgaris).